The primary structure comprises 255 residues: uncharacterized protein (255 aa).

Disordered regions lie at residues 112–145 and 157–183; these read CWPG…PSPG and GLAE…PDAQ.

This is an uncharacterized protein from Rhodospirillum rubrum.